The primary structure comprises 722 residues: Disintegrin and metalloproteinase domain-containing protein 21 (722 aa).

A signal peptide spans 1 to 31; that stretch reads MAVDGTLVYIRVTLLLLWLGVFLSISGYCQA. Positions 32–196 are excised as a propeptide; that stretch reads GPSQHFTSPE…FEEAENSALE (165 aa). Residue N164 is glycosylated (N-linked (GlcNAc...) asparagine). Residues 171 to 178 carry the Cysteine switch motif; the sequence is MRCGLTEK. C173 contacts Zn(2+). At 197–681 the chain is on the extracellular side; sequence PKSAGDWWTH…DSGPASAKRG (485 aa). A Peptidase M12B domain is found at 208–398; the sequence is WFLELVVVVN…NQGSCLHNPP (191 aa). N-linked (GlcNAc...) asparagine glycosylation occurs at N227. Intrachain disulfides connect C316–C393, C356–C378, and C358–C363. H341 is a binding site for Zn(2+). Residue E342 is part of the active site. The Zn(2+) site is built by H345 and H351. Residues N377, N437, N478, N546, and N600 are each glycosylated (N-linked (GlcNAc...) asparagine). One can recognise a Disintegrin domain in the interval 406–492; sequence LKRCGNGVVE…QCPEDRYVQD (87 aa). An intrachain disulfide couples C464 to C484. 3 disulfides stabilise this stretch: C634-C645, C639-C651, and C653-C662. The EGF-like domain occupies 634 to 663; the sequence is CLPETCNMKGICNNKHHCHCGYGWSPPYCQ. A helical membrane pass occupies residues 682-702; the sequence is VFLPLIVIPSLSVLTFLFTVG. Over 703-722 the chain is Cytoplasmic; that stretch reads LLMYLRQCSGPKETKAHSSG.

The cofactor is Zn(2+). Has no obvious cleavage site for furin endopeptidase, suggesting that the proteolytic processing is regulated.

Its subcellular location is the membrane. In terms of biological role, may be involved in sperm maturation and/or fertilization. May also be involved in epithelia functions associated with establishing and maintaining gradients of ions or nutrients. This chain is Disintegrin and metalloproteinase domain-containing protein 21 (ADAM21), found in Homo sapiens (Human).